Reading from the N-terminus, the 465-residue chain is Cysteine--tRNA ligase (465 aa).

Zn(2+) is bound at residue C27. The 'HIGH' region signature appears at 29–39; it reads PTVYDDAHLGH. Zn(2+) is bound by residues C207, H237, and E241. Residues 269–273 carry the 'KMSKS' region motif; it reads KMSKS. K272 contacts ATP.

It belongs to the class-I aminoacyl-tRNA synthetase family. Monomer. Zn(2+) is required as a cofactor.

It localises to the cytoplasm. The catalysed reaction is tRNA(Cys) + L-cysteine + ATP = L-cysteinyl-tRNA(Cys) + AMP + diphosphate. This Helicobacter pylori (strain J99 / ATCC 700824) (Campylobacter pylori J99) protein is Cysteine--tRNA ligase (cysS).